We begin with the raw amino-acid sequence, 545 residues long: Thermosome subunit beta (545 aa).

The protein belongs to the TCP-1 chaperonin family. In terms of assembly, forms a Heterooligomeric complex of two stacked eight-membered rings.

Its function is as follows. Molecular chaperone; binds unfolded polypeptides in vitro, and has a weak ATPase activity. This Thermococcus sp. (strain KS-8) protein is Thermosome subunit beta (thsB).